The following is a 714-amino-acid chain: MGRRSALALAVVSALLCQVWSSGVFELKLQEFVNKKGLLGNRNCCRGGSGPPCACRTFFRVCLKHYQASVSPEPPCTYGSAVTAVLGVDSFSLPDGAGIDPAFSNPIRFPFGFTWPGTFSLIIEALHTDSPDDLATENPERLISRLTTQRHLTVGEEWSQDLHSSGRTDLRYSYRFVCDEHYYGEGCSVFCRPRDDAFGHFTCGERGEKMCDPGWKGQYCTDPICLPGCDDQHGYCDKPGECKCRVGWQGRYCDECIRYPGCLHGTCQQPWQCNCQEGWGGLFCNQDLNYCTHHKPCRNGATCTNTGQGSYTCSCRPGYTGANCELEVDECAPSPCRNGGSCTDLEDSYSCTCPPGFYGKVCELSAMTCADGPCFNGGRCSDNPDGGYTCHCPAGFSGFNCEKKIDLCSSSPCSNGAKCVDLGNSYLCRCQTGFSGRYCEDNVDDCASSPCANGGTCRDSVNDFSCTCPPGYTGRNCSAPVSRCEHAPCHNGATCHQRGQRYMCECAQGYGGANCQFLLPEPPPDLIVAAQGGSFPWVAVCAGVVLVLLLLLGCAAVVVCVRLKLQKHQPPPDPCGGETETMNNLANCQREKDVSVSIIGATQIKNTNKKADFHGDHGADKSSFKARYPTVDYNLIRDLKGDEATVRDAHSKRDTKCQSQGSVGEEKSTSTLRGGEVPDRKRPESVYSTSKDTKYQSVYVLSAEKDECVIATEV.

An N-terminal signal peptide occupies residues 1 to 17 (MGRRSALALAVVSALLC). Residues 18-537 (QVWSSGVFEL…VAAQGGSFPW (520 aa)) are Extracellular-facing. Positions 176 to 220 (FVCDEHYYGEGCSVFCRPRDDAFGHFTCGERGEKMCDPGWKGQYC) constitute a DSL domain. 27 disulfide bridges follow: Cys178/Cys187, Cys191/Cys203, Cys211/Cys220, Cys225/Cys236, Cys229/Cys242, Cys244/Cys253, Cys256/Cys267, Cys262/Cys273, Cys275/Cys284, Cys291/Cys303, Cys297/Cys313, Cys315/Cys324, Cys331/Cys342, Cys336/Cys351, Cys353/Cys362, Cys369/Cys380, Cys374/Cys390, Cys392/Cys401, Cys408/Cys419, Cys413/Cys428, Cys430/Cys439, Cys446/Cys457, Cys451/Cys466, Cys468/Cys477, Cys484/Cys495, Cys489/Cys504, and Cys506/Cys515. EGF-like domains follow at residues 225 to 253 (CLPG…GRYC), 256 to 284 (CIRY…GLFC), and 291 to 324 (CTHH…GANC). The EGF-like 4; calcium-binding domain occupies 331-362 (CAPSPCRNGGSCTDLEDSYSCTCPPGFYGKVC). EGF-like domains are found at residues 369–401 (CADG…GFNC) and 408–439 (CSSS…GRYC). One can recognise an EGF-like 7; calcium-binding domain in the interval 446-477 (CASSPCANGGTCRDSVNDFSCTCPPGYTGRNC). The N-linked (GlcNAc...) asparagine glycan is linked to Asn476. Residues 484 to 515 (CEHAPCHNGATCHQRGQRYMCECAQGYGGANC) form the EGF-like 8 domain. Residues 538 to 560 (VAVCAGVVLVLLLLLGCAAVVVC) traverse the membrane as a helical segment. Residues 561-714 (VRLKLQKHQP…KDECVIATEV (154 aa)) lie on the Cytoplasmic side of the membrane. Lys605 is covalently cross-linked (Glycyl lysine isopeptide (Lys-Gly) (interchain with G-Cter in ubiquitin)). Thr630 carries the phosphothreonine modification. Residues 644-656 (ATVRDAHSKRDTK) are compositionally biased toward basic and acidic residues. Positions 644 to 690 (ATVRDAHSKRDTKCQSQGSVGEEKSTSTLRGGEVPDRKRPESVYSTS) are disordered. Ser685 carries the phosphoserine; by PKB modification. Ser688 carries the phosphoserine modification. The interaction with MAGI1 stretch occupies residues 711–714 (ATEV).

In terms of assembly, homodimer. Interacts with TJP1. Interacts with MAGI1 (via PDZ domain); forms a complex with CTNNB1 and CDH2 and promotes recruitment to the adherens junction and stabilization on the cell surface. Interacts with PSEN1; undergoes a presenilin-dependent gamma-secretase cleavage that releases a Dll1-intracellular form. Interacts with MFAP5. Interacts with MIB1. Interacts with NEURL1B; leads to ubiquitination. Interacts with NEURL1. Interacts with SYNJ2BP; enhances DLL1 protein stability, and promotes Notch signaling in endothelial cells. Interacts with MAGI1, MAGI2, MAGI3 and MPDZ. Interacts (via ubiquitin) with EPN1 (via IUM domain); binding with NOTCH1 attached to neighboring cell, promotes ligand ubiquitination and EPN1 interaction, leading to NECD transendocytosis and Notch signaling. Interacts with NOTCH1. In terms of processing, ubiquitinated by MIB (MIB1 or MIB2), leading to its endocytosis and subsequent degradation. Ubiquitinated; promotes recycling back to the plasma membrane and confers a strong affinity for NOTCH1. Mono- and multi-ubiquitinated. Multi-ubiquitination of Lys-605 by MIB1 promotes both cis and trans-interaction with NOTCH1, as well as activation of Notch signaling. Ubiquitinated by NEURL1B. Post-translationally, phosphorylated in a membrane association-dependent manner. Phosphorylation at Ser-688 requires the presence of Ser-685, whereas phosphorylation at Thr-630 and Ser-685 occur independently of the other sites. Phosphorylation is required for full ligand activity in vitro and affects surface presentation, ectodomain shedding, and endocytosis. O-fucosylated. Can be elongated to a disaccharide by MFNG.

It localises to the apical cell membrane. The protein resides in the cell junction. The protein localises to the adherens junction. It is found in the membrane raft. Its function is as follows. Transmembrane ligand protein of NOTCH1, NOTCH2 and NOTCH3 receptors that binds the extracellular domain (ECD) of Notch receptor in a cis and trans fashion manner. Following transinteraction, ligand cells produce mechanical force that depends of a clathrin-mediated endocytosis, requiring ligand ubiquitination, EPN1 interaction, and actin polymerisation; these events promote Notch receptor extracellular domain (NECD) transendocytosis and triggers Notch signaling through induction of cleavage, hyperphosphorylation, and nuclear accumulation of the intracellular domain of Notch receptors (NICD). Is required for embryonic development and maintenance of adult stem cells in many different tissues and immune systeme; the DLL1-induced Notch signaling is mediated through an intercellular communication that regulates cell lineage, cell specification, cell patterning and morphogenesis through effects on differentiation and proliferation. Plays a role in brain development at different level, namely by regulating neuronal differentiation of neural precursor cells via cell-cell interaction, most likely through the lateral inhibitory system in an endogenous level dependent-manner. During neocortex development, Dll1-Notch signaling transmission is mediated by dynamic interactions between intermediate neurogenic progenitors and radial glia; the cell-cell interactions are mediated via dynamic and transient elongation processes, likely to reactivate/maintain Notch activity in neighboring progenitors, and coordinate progenitor cell division and differentiation across radial and zonal boundaries. During cerebellar development, regulates Bergmann glial monolayer formation and its morphological maturation through a Notch signaling pathway. At the retina and spinal cord level, regulates neurogenesis by preventing the premature differentiation of neural progenitors and also by maintaining progenitors in spinal cord through Notch signaling pathway. Also controls neurogenesis of the neural tube in a progenitor domain-specific fashion along the dorsoventral axis. Maintains quiescence of neural stem cells and plays a role as a fate determinant that segregates asymmetrically to one daughter cell during neural stem cells mitosis, resulting in neuronal differentiation in Dll1-inheriting cell. Plays a role in immune systeme development, namely the development of all T-cells and marginal zone (MZ) B cells. Blocks the differentiation of progenitor cells into the B-cell lineage while promoting the emergence of a population of cells with the characteristics of a T-cell/NK-cell precursor. Also plays a role during muscle development. During early development, inhibits myoblasts differentiation from the medial dermomyotomal lip and later regulates progenitor cell differentiation. Directly modulates cell adhesion and basal lamina formation in satellite cells through Notch signaling. Maintains myogenic progenitors pool by suppressing differentiation through down-regulation of MYOD1 and is required for satellite cell homing and PAX7 expression. During craniofacial and trunk myogenesis suppresses differentiation of cranial mesoderm-derived and somite-derived muscle via MYOD1 regulation but in cranial mesoderm-derived progenitors, is neither required for satellite cell homing nor for PAX7 expression. Also plays a role during pancreatic cell development. During type B pancreatic cell development, may be involved in the initiation of proximodistal patterning in the early pancreatic epithelium. Stimulates multipotent pancreatic progenitor cells proliferation and pancreatic growth by maintaining HES1 expression and PTF1A protein levels. During fetal stages of development, is required to maintain arterial identity and the responsiveness of arterial endothelial cells for VEGFA through regulation of KDR activation and NRP1 expression. Controls sprouting angiogenesis and subsequent vertical branch formation through regulation on tip cell differentiation. Negatively regulates goblet cell differentiation in intestine and controls secretory fat commitment through lateral inhibition in small intestine. Plays a role during inner ear development; negatively regulates auditory hair cell differentiation. Plays a role during nephron development through Notch signaling pathway. Regulates growth, blood pressure and energy homeostasis. The protein is Delta-like protein 1 (Dll1) of Rattus norvegicus (Rat).